The sequence spans 326 residues: MSSFSESALEKKLSELSNSQQSVQTLSLWLIHHRKHAGPIVSVWHRELRKAKSNRKLTFLYLANDVIQNSKRKGPEFTREFESVLVDAFSHVAREADEGCKKPLERLLNIWQERSVYGGEFIQQLKLSMEDSKSPPPKATEEKKSLKRTFQQIQEEEDDDYPGSYSPQDPSAGPLLTEELIKALQDLENAASGDATVRQKIASLPQEVQDVSLLEKITDKEAAERLSKTVDEACLLLAEYNGRLAAELEDRRQLARMLVEYTQNQKDVLSEKEKKLEEYKQKLARVTQVRKELKSHIQSLPDLSLLPNVTGGLAPLPSAGDLFSTD.

At Ser2 the chain carries N-acetylserine. Residues 2 to 133 form the CID domain; sequence SSFSESALEK…QLKLSMEDSK (132 aa). The disordered stretch occupies residues 127-149; sequence LSMEDSKSPPPKATEEKKSLKRT. Positions 128-144 are enriched in basic and acidic residues; the sequence is SMEDSKSPPPKATEEKK. 2 positions are modified to phosphoserine: Ser132 and Ser134. Tyr161 is modified (phosphotyrosine). Phosphoserine is present on residues Ser166 and Ser299.

It belongs to the UPF0400 (RTT103) family. In terms of assembly, homodimer. May form a heterodimer with RPRD1A. Associates with RPAP2. Associates with the RNA polymerase II complex. Preferentially expressed in a range of tumor tissues including colon, lung, liver, breast, prostate, stomach, uterine endometrium and cervical cancers with higher levels in tumors than in adjacent non-tumor tissue (at protein level).

It localises to the nucleus. Interacts with phosphorylated C-terminal heptapeptide repeat domain (CTD) of the largest RNA polymerase II subunit POLR2A, and participates in dephosphorylation of the CTD by RPAP2. Transcriptional regulator which enhances expression of CCND1. Promotes binding of RNA polymerase II to the CCDN1 promoter and to the termination region before the poly-A site but decreases its binding after the poly-A site. Prevents RNA polymerase II from reading through the 3' end termination site and may allow it to be recruited back to the promoter through promotion of the formation of a chromatin loop. Also enhances the transcription of a number of other cell cycle-related genes including CDK2, CDK4, CDK6 and cyclin-E but not CDKN1A, CDKN1B or cyclin-A. Promotes cell proliferation. The chain is Regulation of nuclear pre-mRNA domain-containing protein 1B (RPRD1B) from Homo sapiens (Human).